The primary structure comprises 194 residues: Peptidyl-tRNA hydrolase (194 aa).

Y17 lines the tRNA pocket. The active-site Proton acceptor is the H22. Residues F68, N70, and N116 each contribute to the tRNA site.

Belongs to the PTH family. As to quaternary structure, monomer.

The protein resides in the cytoplasm. The enzyme catalyses an N-acyl-L-alpha-aminoacyl-tRNA + H2O = an N-acyl-L-amino acid + a tRNA + H(+). Hydrolyzes ribosome-free peptidyl-tRNAs (with 1 or more amino acids incorporated), which drop off the ribosome during protein synthesis, or as a result of ribosome stalling. Functionally, catalyzes the release of premature peptidyl moieties from peptidyl-tRNA molecules trapped in stalled 50S ribosomal subunits, and thus maintains levels of free tRNAs and 50S ribosomes. The sequence is that of Peptidyl-tRNA hydrolase from Haemophilus ducreyi (strain 35000HP / ATCC 700724).